A 354-amino-acid polypeptide reads, in one-letter code: Serum paraoxonase/lactonase 3 (354 aa).

A disulfide bridge connects residues Cys42 and Cys352. Asn50 is a glycosylation site (N-linked (GlcNAc...) asparagine). Residues Glu53 and Asp54 each contribute to the Ca(2+) site. His114 acts as the Proton acceptor in catalysis. Ile116 contacts Ca(2+). The residue at position 165 (Ser165) is a Phosphoserine. 5 residues coordinate Ca(2+): Asn167, Asp168, Asn223, Asp268, and Asn269. Residues Asn269 and Asn323 are each glycosylated (N-linked (GlcNAc...) asparagine).

The protein belongs to the paraoxonase family. As to quaternary structure, homodimer. Ca(2+) is required as a cofactor. Glycosylated. In terms of processing, the signal sequence is not cleaved.

The protein resides in the secreted. Its subcellular location is the extracellular space. The catalysed reaction is a phenyl acetate + H2O = a phenol + acetate + H(+). It catalyses the reaction An aryl dialkyl phosphate + H2O = dialkyl phosphate + an aryl alcohol.. It carries out the reaction an N-acyl-L-homoserine lactone + H2O = an N-acyl-L-homoserine + H(+). Has low activity towards the organophosphate paraxon and aromatic carboxylic acid esters. Rapidly hydrolyzes lactones such as statin prodrugs (e.g. lovastatin). Hydrolyzes aromatic lactones and 5- or 6-member ring lactones with aliphatic substituents but not simple lactones or those with polar substituents. This Mus musculus (Mouse) protein is Serum paraoxonase/lactonase 3 (Pon3).